A 245-amino-acid chain; its full sequence is MADS-box transcription factor 55 (245 aa).

The 61-residue stretch at 1–61 (MARERREIRR…GKLSQFASSN (61 aa)) folds into the MADS-box domain. Residues 109–199 (LQLEHSKCSS…RDQMPQVPTA (91 aa)) enclose the K-box domain. The interval 197–245 (PTAGLAVPDTENVLTEDGQSSESVMTALNSGSSQDNDDGSDISLKLGLP) is disordered. The span at 213-224 (DGQSSESVMTAL) shows a compositional bias: polar residues.

Expressed in roots, shoots and developing panicles. Expressed in shoots.

It localises to the nucleus. Functionally, transcription factor that acts as a negative regulator of brassinosteroid signaling. The protein is MADS-box transcription factor 55 (MADS55) of Oryza sativa subsp. japonica (Rice).